The following is a 1115-amino-acid chain: Phytochrome E (1115 aa).

Residues aspartate 213–leucine 383 form the GAF domain. Cysteine 318 contributes to the phytochromobilin binding site. The PAS 1 domain occupies methionine 598–glutamate 669. The PAC domain maps to arginine 672–arginine 728. The PAS 2 domain occupies aspartate 732–leucine 803. The Histidine kinase domain occupies tyrosine 880–threonine 1100.

It belongs to the phytochrome family. Homodimer. In terms of processing, contains one covalently linked phytochromobilin chromophore.

Regulatory photoreceptor which exists in two forms that are reversibly interconvertible by light: the Pr form that absorbs maximally in the red region of the spectrum and the Pfr form that absorbs maximally in the far-red region. Photoconversion of Pr to Pfr induces an array of morphogenic responses, whereas reconversion of Pfr to Pr cancels the induction of those responses. Pfr controls the expression of a number of nuclear genes including those encoding the small subunit of ribulose-bisphosphate carboxylase, chlorophyll A/B binding protein, protochlorophyllide reductase, rRNA, etc. It also controls the expression of its own gene(s) in a negative feedback fashion. The polypeptide is Phytochrome E (PHYE) (Ipomoea nil (Japanese morning glory)).